Here is a 399-residue protein sequence, read N- to C-terminus: MAKNRHLFTSESVSDGHPDKIADQISDAILDAIISKDPDARVACETTVTTGLVLVAGEITTSVYVDIPKIVRDTIKEIGYTRAKYGFDAETCAVLTAIDEQSPDIAQGVDEALESRSGSEIDAAIEAIGAGDQGLMFGFATDETEELMPLPIFLAHGLARKLTELRKTNKLDYLRPDAKTQVTVEYDEFNQPVRIDTIVVSTQHHPDITQEQIAKDLHTHLFPEVIDASFLDENTKYFINPTGRFVIGGPLGDAGLTGRKIIVDTYGGYARHGGGAFSGKDPTKVDRSGAYAARYVAKNIVAAGLAKKVEVQVAYAIGVARPVSISIDTYGTSDYSEQELIDGVNELFDLRPAGIIHMLDLRRPIYRQTAAFGHFGRSDLDLPWERTDKAEALKKLIVK.

His-17 provides a ligand contact to ATP. Position 19 (Asp-19) interacts with Mg(2+). Glu-45 contributes to the K(+) binding site. L-methionine is bound by residues Glu-58 and Gln-101. The flexible loop stretch occupies residues 101–111 (QSPDIAQGVDE). ATP is bound by residues 177-179 (DAK), 244-245 (RF), Asp-253, 259-260 (RK), Ala-276, and Lys-280. Residue Asp-253 participates in L-methionine binding. Lys-284 contributes to the L-methionine binding site.

This sequence belongs to the AdoMet synthase family. In terms of assembly, homotetramer; dimer of dimers. Requires Mg(2+) as cofactor. The cofactor is K(+).

The protein resides in the cytoplasm. The enzyme catalyses L-methionine + ATP + H2O = S-adenosyl-L-methionine + phosphate + diphosphate. Its pathway is amino-acid biosynthesis; S-adenosyl-L-methionine biosynthesis; S-adenosyl-L-methionine from L-methionine: step 1/1. Catalyzes the formation of S-adenosylmethionine (AdoMet) from methionine and ATP. The overall synthetic reaction is composed of two sequential steps, AdoMet formation and the subsequent tripolyphosphate hydrolysis which occurs prior to release of AdoMet from the enzyme. This is S-adenosylmethionine synthase from Listeria innocua serovar 6a (strain ATCC BAA-680 / CLIP 11262).